A 149-amino-acid polypeptide reads, in one-letter code: MPVAIMTATCLGVGFVVLVGVLFKLPVGHGARRVQGNICRYTVTVGKRTGVAYGERLPLLCREFGRQGDFYLPDEDGIAALVVRFDAVPELGSVGGSTTRQDEFGVQNATLAGVVMHQAGTLVGDLHTCAIGRRSSRGTSGAATDRLRG.

This is an uncharacterized protein from Acidithiobacillus ferridurans.